Here is a 356-residue protein sequence, read N- to C-terminus: MKASIEQLEPYVPEKPLATLQAELGLTELVRLSANENPYGTSPKVATAVKNWDFTQSNRYPDADAQELRQAVAQQQGIDPNSIVFSVGLDEMIVMLSRTFLATNDQVLVSAPTFSEYGLHAEIEGGQLISVPTLPNDHVNFEGLMKAITPHVKMVWLCNPNNPTGTVESLAAIEAFVQQVPPETMVLIDEAYIDFTPGAAQVTAMQLPAKYPNVVVMRTFSKAYGLANFRIGYAVFNTKYAATMQTIRLPYNVNSLAQVAALAAIDDPNFVKQTVQKNATERAKWMAFFDDQGVTYDQSGANFIFFKYPSATQLADYLVHHGYLIRTGLRPGWLRLTVGTANDNQQLQQLIREFKA.

Residue K222 is modified to N6-(pyridoxal phosphate)lysine.

The protein belongs to the class-II pyridoxal-phosphate-dependent aminotransferase family. Histidinol-phosphate aminotransferase subfamily. In terms of assembly, homodimer. Pyridoxal 5'-phosphate serves as cofactor.

The enzyme catalyses L-histidinol phosphate + 2-oxoglutarate = 3-(imidazol-4-yl)-2-oxopropyl phosphate + L-glutamate. It participates in amino-acid biosynthesis; L-histidine biosynthesis; L-histidine from 5-phospho-alpha-D-ribose 1-diphosphate: step 7/9. The chain is Histidinol-phosphate aminotransferase from Lactiplantibacillus plantarum (strain ATCC BAA-793 / NCIMB 8826 / WCFS1) (Lactobacillus plantarum).